Here is a 505-residue protein sequence, read N- to C-terminus: GMP synthase [glutamine-hydrolyzing] (505 aa).

The 188-residue stretch at 3 to 190 (KVLVVNFGGQ…LRKIARISDV (188 aa)) folds into the Glutamine amidotransferase type-1 domain. Residue C80 is the Nucleophile of the active site. Active-site residues include H164 and E166. The GMPS ATP-PPase domain maps to 191 to 380 (WRPEDQITRI…LGLPEDVVYR (190 aa)). 218 to 224 (SGGVDST) contacts ATP.

It catalyses the reaction XMP + L-glutamine + ATP + H2O = GMP + L-glutamate + AMP + diphosphate + 2 H(+). The protein operates within purine metabolism; GMP biosynthesis; GMP from XMP (L-Gln route): step 1/1. Catalyzes the synthesis of GMP from XMP. The polypeptide is GMP synthase [glutamine-hydrolyzing] (Pyrobaculum aerophilum (strain ATCC 51768 / DSM 7523 / JCM 9630 / CIP 104966 / NBRC 100827 / IM2)).